The following is a 754-amino-acid chain: Exocyst complex component EXO84A (754 aa).

Disordered regions lie at residues 514–540 (RILPQGTSQSTPRRGSSDRQNRPEQRE) and 734–754 (GHGERDVTSPSVSSAKSYTSN). Residues 518 to 527 (QGTSQSTPRR) show a composition bias toward polar residues. The span at 528–540 (GSSDRQNRPEQRE) shows a compositional bias: basic and acidic residues. Positions 741 to 754 (TSPSVSSAKSYTSN) are enriched in polar residues.

Belongs to the EXO84 family. The exocyst complex is composed of SEC3, SEC5, SEC6, SEC8, SEC10, EXO70A1 and EXO84.

Component of the exocyst complex involved in the docking of exocytic vesicles with fusion sites on the plasma membrane during regulated or polarized secretion. Involved in polarized cell growth and organ morphogenesis. During cytokinesis, involved in cell plate initiation, cell plate maturation and formation of new primary cell wall. This is Exocyst complex component EXO84A (EXO84A) from Arabidopsis thaliana (Mouse-ear cress).